The following is a 125-amino-acid chain: Antitoxin MazE5 (125 aa).

Forms a complex with cognate toxin MazF5.

Its function is as follows. Antitoxin component of a type II toxin-antitoxin (TA) system. Upon expression in M.smegmatis neutralizes the effect of cognate toxin MazF5. The sequence is that of Antitoxin MazE5 (mazE5) from Mycobacterium tuberculosis (strain ATCC 25618 / H37Rv).